A 511-amino-acid polypeptide reads, in one-letter code: Cobyric acid synthase (511 aa).

The region spanning Leu-251–Phe-443 is the GATase cobBQ-type domain. Cys-332 functions as the Nucleophile in the catalytic mechanism. His-435 is a catalytic residue.

The protein belongs to the CobB/CobQ family. CobQ subfamily.

It participates in cofactor biosynthesis; adenosylcobalamin biosynthesis. Its function is as follows. Catalyzes amidations at positions B, D, E, and G on adenosylcobyrinic A,C-diamide. NH(2) groups are provided by glutamine, and one molecule of ATP is hydrogenolyzed for each amidation. This chain is Cobyric acid synthase, found in Listeria monocytogenes serotype 4b (strain CLIP80459).